We begin with the raw amino-acid sequence, 94 residues long: Putative testis-specific prion protein (94 aa).

Residues 1–18 (MQHSLVFFFAVILHLSHL) form the signal peptide. N-linked (GlcNAc...) asparagine glycosylation occurs at N44.

As to expression, specifically expressed in adult testis.

Its subcellular location is the secreted. This chain is Putative testis-specific prion protein (PRNT), found in Homo sapiens (Human).